The chain runs to 179 residues: Adenine phosphoribosyltransferase (179 aa).

It belongs to the purine/pyrimidine phosphoribosyltransferase family. As to quaternary structure, homodimer.

Its subcellular location is the cytoplasm. The enzyme catalyses AMP + diphosphate = 5-phospho-alpha-D-ribose 1-diphosphate + adenine. It functions in the pathway purine metabolism; AMP biosynthesis via salvage pathway; AMP from adenine: step 1/1. Its function is as follows. Catalyzes a salvage reaction resulting in the formation of AMP, that is energically less costly than de novo synthesis. The sequence is that of Adenine phosphoribosyltransferase from Methylacidiphilum infernorum (isolate V4) (Methylokorus infernorum (strain V4)).